A 464-amino-acid chain; its full sequence is Fumarate hydratase class II 1 (464 aa).

Substrate-binding positions include 96–98 (SGT), 127–130 (HPND), 137–139 (SSN), and threonine 185. The active-site Proton donor/acceptor is the histidine 186. Serine 316 is an active-site residue. Substrate is bound by residues serine 317 and 322-324 (KVN).

It belongs to the class-II fumarase/aspartase family. Fumarase subfamily. As to quaternary structure, homotetramer.

It is found in the cytoplasm. It catalyses the reaction (S)-malate = fumarate + H2O. It participates in carbohydrate metabolism; tricarboxylic acid cycle; (S)-malate from fumarate: step 1/1. Its function is as follows. Involved in the TCA cycle. Catalyzes the stereospecific interconversion of fumarate to L-malate. This Pseudomonas aeruginosa (strain ATCC 15692 / DSM 22644 / CIP 104116 / JCM 14847 / LMG 12228 / 1C / PRS 101 / PAO1) protein is Fumarate hydratase class II 1.